Here is an 841-residue protein sequence, read N- to C-terminus: Probable alpha-glucuronidase A (841 aa).

Residues 1-20 (MRGLNLFQLILALLLSMVAA) form the signal peptide. N-linked (GlcNAc...) asparagine glycans are attached at residues N51, N76, N85, N149, N222, N279, N310, N343, N450, N465, N527, N576, N682, N723, and N732.

It belongs to the glycosyl hydrolase 67 family.

The protein localises to the secreted. The enzyme catalyses an alpha-D-glucuronoside + H2O = D-glucuronate + an alcohol. Its function is as follows. Alpha-glucuronidase involved in the hydrolysis of xylan, a major structural heterogeneous polysaccharide found in plant biomass representing the second most abundant polysaccharide in the biosphere, after cellulose. Releases 4-O-methylglucuronic acid from xylan. The chain is Probable alpha-glucuronidase A (aguA) from Aspergillus niger (strain ATCC MYA-4892 / CBS 513.88 / FGSC A1513).